Here is a 152-residue protein sequence, read N- to C-terminus: MRLLIAAVGKAKAGPEQDLFRQYCRRLSPPPVLKEVEEKRPLAGPQLKAREAELLLATLPEGAKVVALDEKGRDIGSVDFAHRLRDWRDSGCQDVAFLIGGADGHGDAVRERADLLLSFGRMTWPHMLVRALLAEQLWRAHSILTGHPYHRP.

Residues L68, G100, and 119-124 (FGRMTW) contribute to the S-adenosyl-L-methionine site.

It belongs to the RNA methyltransferase RlmH family. As to quaternary structure, homodimer.

The protein localises to the cytoplasm. It carries out the reaction pseudouridine(1915) in 23S rRNA + S-adenosyl-L-methionine = N(3)-methylpseudouridine(1915) in 23S rRNA + S-adenosyl-L-homocysteine + H(+). Functionally, specifically methylates the pseudouridine at position 1915 (m3Psi1915) in 23S rRNA. In Paramagnetospirillum magneticum (strain ATCC 700264 / AMB-1) (Magnetospirillum magneticum), this protein is Ribosomal RNA large subunit methyltransferase H.